Consider the following 365-residue polypeptide: MQHSIGKTLLVAALATAIAGPVQAEKKSLHIYNWTDYIAPTTLKDFTKESGIDVSYDVFDSNETLEGKLVSGHSGYDIVVPSNNFLGKQIQAGAFQKLDKSKLPNWKNLDPALLKQLEVSDPGNQYAVPYLWGTNGIGYNVAKVKEVLGDQPIDSWAILFEPENMKKLAKCGVAFMDSGDEMLPAALNYLGLDPNTHDPKDYKKAEEVLTKVRPYVSYFHSSKYISDLANGNICVAFGYSGDVFQAAARAEEAGKGIDIQYVIPKEGANLWFDLMAIPADAKAADNAYAFIDYLLRPEVIAKVSDYVGYANAIPGARPLMDKSVSDSEEVYPPQAVLDKLYVSAVLPAKVLRLQTRTWTRIKTGK.

The N-terminal stretch at 1–24 (MQHSIGKTLLVAALATAIAGPVQA) is a signal peptide. Spermidine contacts are provided by Thr35, Glu181, Asp242, and Asn269.

It belongs to the bacterial solute-binding protein PotD/PotF family.

It localises to the periplasm. Its function is as follows. Spermidine-binding protein probably required for its uptake into cells. Binds spermidine with high affinity (KD=14.3 nM). Does not bind putrescine, cadaverine or spermine. Spermidine binding induces large inter-domain conformational changes. Implicated in induction of type 3 secretion systems (T3SS), which play a role in virulence. This is Spermidine-binding periplasmic protein SpuE (spuE) from Pseudomonas aeruginosa (strain ATCC 15692 / DSM 22644 / CIP 104116 / JCM 14847 / LMG 12228 / 1C / PRS 101 / PAO1).